A 570-amino-acid polypeptide reads, in one-letter code: Proline--tRNA ligase (570 aa).

It belongs to the class-II aminoacyl-tRNA synthetase family. ProS type 1 subfamily. As to quaternary structure, homodimer.

It localises to the cytoplasm. It catalyses the reaction tRNA(Pro) + L-proline + ATP = L-prolyl-tRNA(Pro) + AMP + diphosphate. Its function is as follows. Catalyzes the attachment of proline to tRNA(Pro) in a two-step reaction: proline is first activated by ATP to form Pro-AMP and then transferred to the acceptor end of tRNA(Pro). As ProRS can inadvertently accommodate and process non-cognate amino acids such as alanine and cysteine, to avoid such errors it has two additional distinct editing activities against alanine. One activity is designated as 'pretransfer' editing and involves the tRNA(Pro)-independent hydrolysis of activated Ala-AMP. The other activity is designated 'posttransfer' editing and involves deacylation of mischarged Ala-tRNA(Pro). The misacylated Cys-tRNA(Pro) is not edited by ProRS. The protein is Proline--tRNA ligase (proS) of Aquifex aeolicus (strain VF5).